Consider the following 54-residue polypeptide: Defensin-like protein 1 (54 aa).

Disulfide bonds link Cys-6-Cys-54, Cys-17-Cys-39, Cys-23-Cys-48, and Cys-27-Cys-50.

It belongs to the DEFL family.

The protein resides in the secreted. In terms of biological role, possesses antifungal activity insensitive to inorganic cations. Causes germ tubes and hyphae to swell and form multiple hyphal buds. Binds to the plasma membrane of the fungus. Has no inhibitory effect on insect gut alpha-amylase. In Heuchera sanguinea (Coralbells), this protein is Defensin-like protein 1.